The sequence spans 207 residues: Ribosomal RNA small subunit methyltransferase G (207 aa).

S-adenosyl-L-methionine-binding positions include glycine 74, phenylalanine 79, valine 124–glutamate 125, and arginine 138.

It belongs to the methyltransferase superfamily. RNA methyltransferase RsmG family.

It localises to the cytoplasm. The catalysed reaction is guanosine(527) in 16S rRNA + S-adenosyl-L-methionine = N(7)-methylguanosine(527) in 16S rRNA + S-adenosyl-L-homocysteine. Functionally, specifically methylates the N7 position of guanine in position 527 of 16S rRNA. The protein is Ribosomal RNA small subunit methyltransferase G of Hyphomonas neptunium (strain ATCC 15444).